A 115-amino-acid polypeptide reads, in one-letter code: Guanylin (115 aa).

Residues 1–21 form the signal peptide; the sequence is MNACVLSVLCLLGAVAVLVEG. The propeptide occupies 22-100; that stretch reads VTVQDGDLSF…LQRLEAIAQD (79 aa). 3 cysteine pairs are disulfide-bonded: Cys-69-Cys-82, Cys-104-Cys-112, and Cys-107-Cys-115.

The protein belongs to the guanylin family.

It localises to the secreted. In terms of biological role, endogenous activator of intestinal guanylate cyclase. It stimulates this enzyme through the same receptor binding region as the heat-stable enterotoxins. The sequence is that of Guanylin (GUCA2A) from Notomys alexis (Spinifex hopping mouse).